The primary structure comprises 194 residues: GTP cyclohydrolase-2 (194 aa).

Residue 47 to 51 participates in GTP binding; that stretch reads RVHSE. Residues cysteine 52, cysteine 63, and cysteine 65 each contribute to the Zn(2+) site. GTP contacts are provided by residues glutamine 68, 90–92, and threonine 112; that span reads EGR. Aspartate 124 (proton acceptor) is an active-site residue. The active-site Nucleophile is the arginine 126. Residues threonine 147 and lysine 152 each contribute to the GTP site.

This sequence belongs to the GTP cyclohydrolase II family. As to quaternary structure, homodimer. Zn(2+) serves as cofactor.

The enzyme catalyses GTP + 4 H2O = 2,5-diamino-6-hydroxy-4-(5-phosphoribosylamino)-pyrimidine + formate + 2 phosphate + 3 H(+). It participates in cofactor biosynthesis; riboflavin biosynthesis; 5-amino-6-(D-ribitylamino)uracil from GTP: step 1/4. In terms of biological role, catalyzes the conversion of GTP to 2,5-diamino-6-ribosylamino-4(3H)-pyrimidinone 5'-phosphate (DARP), formate and pyrophosphate. The polypeptide is GTP cyclohydrolase-2 (Buchnera aphidicola subsp. Acyrthosiphon pisum (strain APS) (Acyrthosiphon pisum symbiotic bacterium)).